The chain runs to 389 residues: Geranylgeranyl pyrophosphate synthase A (389 aa).

Isopentenyl diphosphate-binding residues include Lys-99, Arg-102, and His-131. Residues Asp-138 and Asp-142 each contribute to the Mg(2+) site. Dimethylallyl diphosphate is bound at residue Arg-147. Arg-148 contacts isopentenyl diphosphate.

This sequence belongs to the FPP/GGPP synthase family. Requires Mg(2+) as cofactor.

It is found in the cytoplasm. It carries out the reaction isopentenyl diphosphate + (2E)-geranyl diphosphate = (2E,6E)-farnesyl diphosphate + diphosphate. It catalyses the reaction isopentenyl diphosphate + (2E,6E)-farnesyl diphosphate = (2E,6E,10E)-geranylgeranyl diphosphate + diphosphate. Its pathway is isoprenoid biosynthesis; farnesyl diphosphate biosynthesis; farnesyl diphosphate from geranyl diphosphate and isopentenyl diphosphate: step 1/1. The protein operates within isoprenoid biosynthesis; geranylgeranyl diphosphate biosynthesis; geranylgeranyl diphosphate from farnesyl diphosphate and isopentenyl diphosphate: step 1/1. In terms of biological role, catalyzes the trans-addition of the 2 molecules of isopentenyl diphosphate (IPP) onto geranyl diphosphate (GDP) to form geranylgeranyl pyrophosphate (GGDP). Does not catalyze the conversion of dimethylallyl diphosphate (DMAPP). The sequence is that of Geranylgeranyl pyrophosphate synthase A (GGS-A) from Phomopsis amygdali (Fusicoccum amygdali).